Reading from the N-terminus, the 495-residue chain is Fusicoccadiene 8-ol C-16 hydroxylase (495 aa).

Residues 12 to 32 (VLLALIVWIGTTIIYNIYFHP) form a helical membrane-spanning segment. Asparagine 249 and asparagine 317 each carry an N-linked (GlcNAc...) asparagine glycan. A heme-binding site is contributed by cysteine 439.

This sequence belongs to the cytochrome P450 family. Heme is required as a cofactor.

It localises to the membrane. The protein operates within mycotoxin biosynthesis. Functionally, cytochrome P450 monooxygenase; part of the gene cluster that mediates the biosynthesis of the diterpene glucoside brassicicene C. In the first step of the brassicicene C biosynthesis, the bifunctional diterpene synthase bsc8 that possesses both prenyl transferase and terpene cyclase activity, converts isopentenyl diphosphate and dimethylallyl diphosphate into geranylgeranyl diphosphate (GGDP) that is further converted into fusicocca-2,10(14)-diene, the first precursor for brassicicene C. Fusicocca-2,10(14)-diene is then substrate of cytochrome P450 monooxygenase bsc1 for hydroxylation at the C-8 position. Oxidation at C-16 position to aldehyde is then catalyzed by the cytochrome P450 monooyxygenase bsc7, yielding fusicocca-2,10(14)-diene-8-beta,16-diol. Follows the isomerization of the double bond and reduction of aldehyde to alcohol catalyzed by the short-chain dehydrogenase/reductase bsc3 to yield the diol compound fusicocca-1,10(14)-diene-8 beta,16-diol. The next step is the oxidation at the C-3 position of fusicocca-2,10(14)-diene-8-beta,16-diol catalyzed by the alpha-ketoglutarate dependent dioxygenase bsc9, to produce a triol compound. Methylation of the hydroxy group at position 16 is performed by the methyltransferase bsc6. 16-O-methylation is followed by oxidation at the C-13 position to ketone and an alkyl shift of the methyl group leads to brassicicene C. Although the probable acetyltransferase bsc4 is included in the gene cluster, no acetylation reactions are necessary for brassicicene C biosynthesis. However, the fact that brassicicene E, which is a structurally related compound having an acetoxy group at position 12, was previously isolated from another strain of A.brassicicola suggests that the ATCC 96836 strain might also produce a small amount of brassicicene E. This Alternaria brassicicola (Dark leaf spot agent) protein is Fusicoccadiene 8-ol C-16 hydroxylase.